Consider the following 249-residue polypeptide: Adenosylcobinamide-GDP ribazoletransferase (249 aa).

The next 6 membrane-spanning stretches (helical) occupy residues 36 to 56, 57 to 77, 106 to 126, 133 to 153, 188 to 208, and 226 to 246; these read LVGFLLGSIAAGVCYAMHSIG, LNLAADVLGLVTIITLTGGLH, VGAMGVIALATVLLLKIAFLF, KLTAFIMAPMAGRWAMVLAIT, LWLFGLPGLALLGIVFFITWL, and GALGEMIETWVIFLILLGQQI.

It belongs to the CobS family. It depends on Mg(2+) as a cofactor.

The protein localises to the cell membrane. It catalyses the reaction alpha-ribazole + adenosylcob(III)inamide-GDP = adenosylcob(III)alamin + GMP + H(+). The enzyme catalyses alpha-ribazole 5'-phosphate + adenosylcob(III)inamide-GDP = adenosylcob(III)alamin 5'-phosphate + GMP + H(+). It functions in the pathway cofactor biosynthesis; adenosylcobalamin biosynthesis; adenosylcobalamin from cob(II)yrinate a,c-diamide: step 7/7. In terms of biological role, joins adenosylcobinamide-GDP and alpha-ribazole to generate adenosylcobalamin (Ado-cobalamin). Also synthesizes adenosylcobalamin 5'-phosphate from adenosylcobinamide-GDP and alpha-ribazole 5'-phosphate. The polypeptide is Adenosylcobinamide-GDP ribazoletransferase (Desulforamulus reducens (strain ATCC BAA-1160 / DSM 100696 / MI-1) (Desulfotomaculum reducens)).